Here is a 398-residue protein sequence, read N- to C-terminus: Lipoyl synthase, mitochondrial (398 aa).

The transit peptide at 1 to 32 directs the protein to the mitochondrion; it reads MIALRVHNTRVVSRSLTVWTRPSPTLTLSRSL. Residues C117, C122, C128, C147, C151, C154, and S362 each contribute to the [4Fe-4S] cluster site. The Radical SAM core domain occupies 132–351; sequence KKSEATATIM…RDTALEMGFL (220 aa).

This sequence belongs to the radical SAM superfamily. Lipoyl synthase family. [4Fe-4S] cluster is required as a cofactor.

It localises to the mitochondrion. The enzyme catalyses [[Fe-S] cluster scaffold protein carrying a second [4Fe-4S](2+) cluster] + N(6)-octanoyl-L-lysyl-[protein] + 2 oxidized [2Fe-2S]-[ferredoxin] + 2 S-adenosyl-L-methionine + 4 H(+) = [[Fe-S] cluster scaffold protein] + N(6)-[(R)-dihydrolipoyl]-L-lysyl-[protein] + 4 Fe(3+) + 2 hydrogen sulfide + 2 5'-deoxyadenosine + 2 L-methionine + 2 reduced [2Fe-2S]-[ferredoxin]. Its pathway is protein modification; protein lipoylation via endogenous pathway; protein N(6)-(lipoyl)lysine from octanoyl-[acyl-carrier-protein]: step 2/2. Catalyzes the radical-mediated insertion of two sulfur atoms into the C-6 and C-8 positions of the octanoyl moiety bound to the lipoyl domains of lipoate-dependent enzymes, thereby converting the octanoylated domains into lipoylated derivatives. This Scheffersomyces stipitis (strain ATCC 58785 / CBS 6054 / NBRC 10063 / NRRL Y-11545) (Yeast) protein is Lipoyl synthase, mitochondrial.